The sequence spans 314 residues: Cytochrome c biogenesis protein CcsA (314 aa).

Helical transmembrane passes span 15-35 (VSFI…ISLI), 48-68 (LITI…WIIS), 73-93 (ISNL…GQLL), 102-122 (IIPA…CFVL), 148-168 (VMLS…VLFI), 216-236 (SILV…IWAN), 250-267 (TWAF…HMRI), and 277-297 (ALLA…VNFL).

This sequence belongs to the CcmF/CycK/Ccl1/NrfE/CcsA family. In terms of assembly, may interact with ccs1.

It is found in the cellular thylakoid membrane. Functionally, required during biogenesis of c-type cytochromes (cytochrome c6 and cytochrome f) at the step of heme attachment. This is Cytochrome c biogenesis protein CcsA from Prochlorococcus marinus subsp. pastoris (strain CCMP1986 / NIES-2087 / MED4).